Reading from the N-terminus, the 387-residue chain is N-acetyldiaminopimelate deacetylase (387 aa).

D75 is a catalytic residue. Residue E134 is the Proton acceptor of the active site.

It belongs to the peptidase M20A family. N-acetyldiaminopimelate deacetylase subfamily.

The enzyme catalyses N-acetyl-(2S,6S)-2,6-diaminopimelate + H2O = (2S,6S)-2,6-diaminopimelate + acetate. It functions in the pathway amino-acid biosynthesis; L-lysine biosynthesis via DAP pathway; LL-2,6-diaminopimelate from (S)-tetrahydrodipicolinate (acetylase route): step 3/3. Functionally, catalyzes the conversion of N-acetyl-diaminopimelate to diaminopimelate and acetate. The sequence is that of N-acetyldiaminopimelate deacetylase from Leuconostoc citreum (strain KM20).